The chain runs to 580 residues: Mucolipin-1 (580 aa).

The interval 1-38 is disordered; sequence MTDPAGPRGSETERLLTPNPGYGTQVGPSPAPPTPPEE. Residues 1–65 lie on the Cytoplasmic side of the membrane; the sequence is MTDPAGPRGS…FRAKGRKPCK (65 aa). Phosphoserine is present on Ser-10. The short motif at 11–16 is the Dileucine motif; mediates targeting to lysosomes element; sequence ETERLL. Positions 42 to 62 are interaction with phosphoinositides; the sequence is RRRLKYFFMSPCDKFRAKGRK. A helical membrane pass occupies residues 66-86; it reads LMLQVVKILVVTVQLILFGLS. The Extracellular portion of the chain corresponds to 87-298; sequence NQLAVTFREE…VFRHGDNSFR (212 aa). Positions 107–121 are extracellular/lumenal pore loop; it reads LGYSDGADDTFAAYT. Residues Cys-166 and Cys-192 are joined by a disulfide bond. A glycan (N-linked (GlcNAc...) asparagine) is linked at Asn-230. A disulfide bridge connects residues Cys-253 and Cys-284. The helical transmembrane segment at 299-321 threads the bilayer; sequence LLFDVVVILTCSLSFLLCARSLL. Topologically, residues 322-350 are cytoplasmic; the sequence is RGFLLQNEFVRFMWRQRRRVISLWERLEF. Residues 351–371 form a helical membrane-spanning segment; that stretch reads VNGWYILLVTSDVLTISGTIM. Residues 372–382 lie on the Extracellular side of the membrane; the sequence is KIGIEAKNLAS. Residues 383 to 405 traverse the membrane as a helical segment; that stretch reads YDVCSILLGTSTLLVWVGVIRYL. Topologically, residues 406-427 are cytoplasmic; sequence TFFHNYNILIATLRVALPSVMR. Residues 428-448 traverse the membrane as a helical segment; sequence FCCCVAVIYLGYCFCGWIVLG. At 449-456 the chain is on the extracellular side; sequence PYHVKFRS. The segment at residues 457 to 477 is an intramembrane region (pore-forming); sequence LSMVSECLFSLINGDDMFVTF. The Selectivity filter signature appears at 469–474; the sequence is NGDDMF. Residues 478 to 491 are Extracellular-facing; sequence AAMQAQQGRSSLVW. The helical transmembrane segment at 492–513 threads the bilayer; that stretch reads LFSQLYLYSFISLFIYMVLSLF. The Cytoplasmic portion of the chain corresponds to 514 to 580; that stretch reads IALITGAYDT…PSEEHSLLVN (67 aa). Residues Ser-557 and Ser-559 each carry the phosphoserine; by PAK modification. Residues 565-567 are required for palmitoylation and association with membranes; that stretch reads CCC. Positions 573 to 578 match the Dileucine internalization motif; mediates AP2 complex-dependent internalization motif; it reads EEHSLL.

Belongs to the transient receptor (TC 1.A.4) family. Polycystin subfamily. MCOLN1 sub-subfamily. In terms of assembly, homotetramer. Homooligomer. Can heterooligomerize with MCOLN2 or MCOLN3; heteromeric assemblies have different channel properties as compared to the respective homooligomers and may be tissue-specific. Interacts with PDCD6. Interacts with TMEM163. Interacts with LAPTM4B. Post-translationally, palmitoylated; involved in association with membranes. Phosphorylation by PKA inhibits channel activity. Dephosphorylation increases activity. In terms of processing, proteolytically cleaved probably involving multiple lysosomal proteases including cathepsin B; inhibits lysosomal channel activity.

It is found in the late endosome membrane. Its subcellular location is the lysosome membrane. The protein localises to the cytoplasmic vesicle membrane. It localises to the cell projection. The protein resides in the phagocytic cup. It is found in the cytoplasmic vesicle. Its subcellular location is the phagosome membrane. The protein localises to the cell membrane. It carries out the reaction Ca(2+)(in) = Ca(2+)(out). It catalyses the reaction Fe(2+)(in) = Fe(2+)(out). The catalysed reaction is Mg(2+)(in) = Mg(2+)(out). The enzyme catalyses K(+)(in) = K(+)(out). It carries out the reaction Na(+)(in) = Na(+)(out). Its activity is regulated as follows. Channel activity is controlled by multiple regulatory mechanisms in different subcellular compartments. Channel function is transiently modulated by changes in Ca(2+) in a pH-dependent manner; pH changes modify the aggregation state of unitary channels; a negative cooperativity between extracellular/lumenal Ca(2+) and H(+) is suggested. Regulated by phosphoinositides in a compartment-specific manner: in lysosomes activated by PtdIns(3,5)P2 (Phosphatidylinositol 3,5-bisphosphate) and at the plasma membrane inhibited by PtdIns(4,5)P2 (Phosphatidylinositol 4,5-bisphosphate). Its function is as follows. Nonselective cation channel probably playing a role in the regulation of membrane trafficking events and of metal homeostasis. Acts as a Ca(2+)-permeable cation channel with inwardly rectifying activity. Proposed to play a major role in Ca(2+) release from late endosome and lysosome vesicles to the cytoplasm, which is important for many lysosome-dependent cellular events, including the fusion and trafficking of these organelles, exocytosis and autophagy. Required for efficient uptake of large particles in macrophages in which Ca(2+) release from the lysosomes triggers lysosomal exocytosis. May also play a role in phagosome-lysosome fusion. Involved in lactosylceramide trafficking indicative for a role in the regulation of late endocytic membrane fusion/fission events. By mediating lysosomal Ca(2+) release is involved in regulation of mTORC1 signaling and in mTOR/TFEB-dependent lysosomal adaptation to environmental cues such as nutrient levels. Seems to act as lysosomal active oxygen species (ROS) sensor involved in ROS-induced TFEB activation and autophagy. Also functions as a Fe(2+) permeable channel in late endosomes and lysosomes. Also permeable to Mg(2+), Na(+). K(+) and Cs(+). Proposed to play a role in zinc homeostasis probably implicating its association with TMEM163. In adaptive immunity, TRPML2 and TRPML1 may play redundant roles in the function of the specialized lysosomes of B cells. May contribute to cellular lipase activity within the late endosomal pathway or at the cell surface which may be involved in processes of membrane reshaping and vesiculation, especially the growth of tubular structures. However, it is not known, whether it conveys the enzymatic activity directly, or merely facilitates the activity of an associated phospholipase. This is Mucolipin-1 (MCOLN1) from Macaca fascicularis (Crab-eating macaque).